The primary structure comprises 200 residues: Phospholipase A2 inhibitor LNF1 (200 aa).

The first 19 residues, 1 to 19 (MKYLHTICLLFIFVARGNS), serve as a signal peptide directing secretion. 8 cysteine pairs are disulfide-bonded: cysteine 22–cysteine 46, cysteine 25–cysteine 32, cysteine 39–cysteine 67, cysteine 73–cysteine 94, cysteine 95–cysteine 100, cysteine 118–cysteine 143, cysteine 136–cysteine 165, and cysteine 169–cysteine 191. The N-linked (GlcNAc...) asparagine glycan is linked to asparagine 176.

It belongs to the CNF-like-inhibitor family. As to quaternary structure, occurs as a mixture of oligomers. Tetrameric arrangement appears to be the predominant quaternary structure. As to expression, expressed by the liver.

The protein localises to the secreted. Its function is as follows. Inhibits the enzymatic activity of phospholipase A2 (PA2). This Lachesis muta muta (Bushmaster) protein is Phospholipase A2 inhibitor LNF1.